The primary structure comprises 248 residues: 5'-nucleotidase SurE (248 aa).

A divalent metal cation is bound by residues aspartate 8, aspartate 9, serine 39, and asparagine 91.

This sequence belongs to the SurE nucleotidase family. It depends on a divalent metal cation as a cofactor.

The protein resides in the cytoplasm. The enzyme catalyses a ribonucleoside 5'-phosphate + H2O = a ribonucleoside + phosphate. Functionally, nucleotidase that shows phosphatase activity on nucleoside 5'-monophosphates. This chain is 5'-nucleotidase SurE, found in Geobacter sp. (strain M21).